A 219-amino-acid chain; its full sequence is MLNVFRIAGDFSHLASIIILIQSITTSNSVDGISLKTQLLYTLVFITRYLNLFTKWTSLYNFLMKIVFISSSVYVIVLMRQQKFKNPVAYQDMITRDQFKIKFLIVPCILLGLIFNYRFSFIQICWSFSLWLESVAILPQLFMLTKTGKAKQLTSHYIFALGLYRALYIPNWIWRYYTEERFDKLSVFTGVIQTLVYSDFFYIYYQKVIKLGGDLELPQ.

Over 1–3 (MLN) the chain is Lumenal. A helical membrane pass occupies residues 4–22 (VFRIAGDFSHLASIIILIQ). Topologically, residues 23–36 (SITTSNSVDGISLK) are cytoplasmic. The chain crosses the membrane as a helical span at residues 37–54 (TQLLYTLVFITRYLNLFT). Residues 55-62 (KWTSLYNF) are Lumenal-facing. The chain crosses the membrane as a helical span at residues 63-82 (LMKIVFISSSVYVIVLMRQQ). Topologically, residues 83 to 102 (KFKNPVAYQDMITRDQFKIK) are cytoplasmic. The helical transmembrane segment at 103 to 116 (FLIVPCILLGLIFN) threads the bilayer. Over 117–123 (YRFSFIQ) the chain is Lumenal. A helical transmembrane segment spans residues 124-143 (ICWSFSLWLESVAILPQLFM). The Cytoplasmic portion of the chain corresponds to 144–155 (LTKTGKAKQLTS). A helical membrane pass occupies residues 156–174 (HYIFALGLYRALYIPNWIW). Residues 175 to 184 (RYYTEERFDK) are Lumenal-facing. A helical transmembrane segment spans residues 185 to 205 (LSVFTGVIQTLVYSDFFYIYY). The Cytoplasmic segment spans residues 206–219 (QKVIKLGGDLELPQ).

It belongs to the ERD2 family.

It localises to the endoplasmic reticulum membrane. In terms of biological role, required for the retention of luminal endoplasmic reticulum proteins. Determines the specificity of the luminal ER protein retention system. Also required for normal vesicular traffic through the Golgi. This receptor recognizes H-D-E-L and D-D-E-L, but not K-D-E-L. This chain is ER lumen protein-retaining receptor (ERD2), found in Kluyveromyces lactis (strain ATCC 8585 / CBS 2359 / DSM 70799 / NBRC 1267 / NRRL Y-1140 / WM37) (Yeast).